The chain runs to 88 residues: MKKRQVVIKQRKSSYTMTSSSSNVRYVECQKNHAANIGGYAVDGCREFMASGGDDALTCAACGCHRNFHRREVDTEVVCEYSPPNANN.

Residues 26 to 72 (YVECQKNHAANIGGYAVDGCREFMASGGDDALTCAACGCHRNFHRRE) form a ZF-HD dimerization-type; degenerate zinc finger.

In terms of assembly, homo- and heterodimers. Interacts with ZHD3, ZHD5, ZHD6, ZHD7, ZHD8, ZHD9, ZHD10 and ZHD13. In terms of tissue distribution, mostly expressed in roots, stems and flowers, present in seedlings and leaves, and weakly observed in inflorescence and siliques.

The protein localises to the cytoplasm. In terms of biological role, inhibits zinc finger homeodomain (ZHD) transcription factors by interacting with them to prevent both their nuclear localization and their DNA-binding properties. Involved in integrating signals from multiple hormones by regulating the expression of specific genes. Promotes the formation of ectopic shoot meristems on leaf margins. This Arabidopsis thaliana (Mouse-ear cress) protein is Mini zinc finger protein 3 (MIF3).